Consider the following 270-residue polypeptide: MTVLKEQPPRLLRGIPLAANDLRRTFGQREVLRGVDLHIPAGQFVAIVGRSGCGKSTLLRLLAGLDQPSGGELLAGAAPLAEAREDTRLMFQDARLLPWKKVIDNVGLGLSGNWRPRALEALDAVGLAERAHEWPAALSGGQKQRVALARALIHQPRLLLLDEPLGALDALTRIEMQQLIERLWRQHGFTVLLVTHDVSEAVAVADRVILIEDGAVGLDLVVDLPRPRVRGSHRLAALESEVLNRVLSVPGTPPEPEPVAPLPTHLRWAH.

The region spanning 17–238 is the ABC transporter domain; it reads LAANDLRRTF…VRGSHRLAAL (222 aa). 49–56 contributes to the ATP binding site; the sequence is GRSGCGKS. Residues 250-270 are disordered; the sequence is PGTPPEPEPVAPLPTHLRWAH. The span at 251–261 shows a compositional bias: pro residues; it reads GTPPEPEPVAP.

The protein belongs to the ABC transporter superfamily. Aliphatic sulfonates importer (TC 3.A.1.17.2) family. The complex is composed of two ATP-binding proteins (SsuB), two transmembrane proteins (SsuC) and a solute-binding protein (SsuA).

It localises to the cell inner membrane. It carries out the reaction ATP + H2O + aliphatic sulfonate-[sulfonate-binding protein]Side 1 = ADP + phosphate + aliphatic sulfonateSide 2 + [sulfonate-binding protein]Side 1.. In terms of biological role, part of the ABC transporter complex SsuABC involved in aliphatic sulfonates import. Responsible for energy coupling to the transport system. This is Aliphatic sulfonates import ATP-binding protein SsuB from Pseudomonas entomophila (strain L48).